The primary structure comprises 648 residues: Biosynthetic arginine decarboxylase (648 aa).

At Lys-109 the chain carries N6-(pyridoxal phosphate)lysine. 291–301 (IDVGGGLGIDF) lines the substrate pocket.

It belongs to the Orn/Lys/Arg decarboxylase class-II family. SpeA subfamily. Mg(2+) serves as cofactor. Requires pyridoxal 5'-phosphate as cofactor.

The enzyme catalyses L-arginine + H(+) = agmatine + CO2. It functions in the pathway amine and polyamine biosynthesis; agmatine biosynthesis; agmatine from L-arginine: step 1/1. In terms of biological role, catalyzes the biosynthesis of agmatine from arginine. This chain is Biosynthetic arginine decarboxylase, found in Prochlorococcus marinus (strain MIT 9301).